A 37-amino-acid polypeptide reads, in one-letter code: Large ribosomal subunit protein bL36c (37 aa).

The protein belongs to the bacterial ribosomal protein bL36 family.

The protein resides in the plastid. It localises to the chloroplast. The polypeptide is Large ribosomal subunit protein bL36c (Lolium perenne (Perennial ryegrass)).